Reading from the N-terminus, the 353-residue chain is Phosphate acyltransferase (353 aa).

This sequence belongs to the PlsX family. As to quaternary structure, homodimer. Probably interacts with PlsY.

Its subcellular location is the cytoplasm. The enzyme catalyses a fatty acyl-[ACP] + phosphate = an acyl phosphate + holo-[ACP]. It participates in lipid metabolism; phospholipid metabolism. Catalyzes the reversible formation of acyl-phosphate (acyl-PO(4)) from acyl-[acyl-carrier-protein] (acyl-ACP). This enzyme utilizes acyl-ACP as fatty acyl donor, but not acyl-CoA. The sequence is that of Phosphate acyltransferase from Bradyrhizobium sp. (strain BTAi1 / ATCC BAA-1182).